The sequence spans 336 residues: MAIYTRTGDAGTTSLFTGQRVSKTHPRVEAYGTLDELNAALSLCACAAADENHRTLLEAIQQQLFWFSAELASDSEQPSPKQRYISSEEISALEAAIDRAMARVEPLHSFILPGRCEAASRLHFARTLARRAERRLVELATEVNVRQVLMRYINRLSDCLYALARAEDSDAHQANIIREVSKRYLAACQPPHSKETTPVALSFHDLHQLTRAAVERAQQLQVPVVVSIVDAHGTETVTWRMPDALLVSSELAPKKAWTAVAMKTATHELSDVVQPGAALYGLESHLQGKVVTFGGGYALWRDGILIGGLGISGGSVEQDMDIAQTAIAAINVGTHQ.

The segment at 1 to 185 is pduON; that stretch reads MAIYTRTGDA…IIREVSKRYL (185 aa). Residues 194–336 form a pduOC region; that stretch reads KETTPVALSF…IAAINVGTHQ (143 aa). His207 contributes to the heme binding site. The Mg(2+) site is built by Glu215 and Gln218.

This sequence belongs to the Cob(I)alamin adenosyltransferase family. PduO subfamily. As to quaternary structure, the C-terminal domain (PduOC) forms stable octamers and also crystallizes as an octamer. Forms a complex with PduS. Requires heme b as cofactor. Mg(2+) is required as a cofactor.

The protein localises to the bacterial microcompartment. The catalysed reaction is cob(I)alamin-[corrinoid adenosyltransferase] + ATP = apo-[corrinoid adenosyltransferase] + adenosylcob(III)alamin + triphosphate. It functions in the pathway polyol metabolism; 1,2-propanediol degradation. The protein operates within cofactor biosynthesis; adenosylcobalamin biosynthesis. Its activity is regulated as follows. Inhibited by ADP but not significantly by other nucleotides, inhibited by diphosphate and less well by triphosphate. Functionally, converts cob(I)alamin to adenosylcobalamin (adenosylcob(III)alamin), the cofactor for propanediol dehydratase. Found in the bacterial microcompartment (BMC) dedicated to 1,2-propanediol (1,2-PD) degradation. For adenosylcobalamin synthesis dATP can replace ATP, but no other nucleotides will substitute. PduS and PduO allow regeneration of the adenosylcobalamin cofactor within the BMC. In terms of biological role, the 1,2-PD-specific bacterial microcompartment (BMC) concentrates low levels of 1,2-PD catabolic enzymes, concentrates volatile reaction intermediates thus enhancing pathway flux and keeps the level of toxic, mutagenic propionaldehyde low. In Salmonella typhimurium (strain LT2 / SGSC1412 / ATCC 700720), this protein is Corrinoid adenosyltransferase PduO.